A 270-amino-acid polypeptide reads, in one-letter code: uncharacterized protein (270 aa).

Residues 1 to 22 (MEYIKKIALYMSVLLLIIFIGG) form the signal peptide. A lipid anchor (N-palmitoyl cysteine) is attached at Cys-23. Residue Cys-23 is the site of S-diacylglycerol cysteine attachment.

It belongs to the staphylococcal tandem lipoprotein family.

It localises to the cell membrane. This is an uncharacterized protein from Staphylococcus aureus (strain N315).